A 560-amino-acid polypeptide reads, in one-letter code: Diphtheria toxin homolog CRM228 (560 aa).

An N-terminal signal peptide occupies residues 1 to 25 (MSRKLFASILIGALLGIGAPPSAHA). The NAD(+) site is built by H46 and Y90. Residue E173 is part of the active site. Intrachain disulfides connect C211–C226 and C486–C496.

In Corynebacterium diphtheriae, this protein is Diphtheria toxin homolog CRM228.